We begin with the raw amino-acid sequence, 47 residues long: Diuretic hormone 2 (47 aa).

It belongs to the sauvagine/corticotropin-releasing factor/urotensin I family.

The protein localises to the secreted. Its function is as follows. Stimulates fluid secretion by the Malpighian tubules. Increases cyclic AMP production in Malpighian tubules. The chain is Diuretic hormone 2 from Tenebrio molitor (Yellow mealworm beetle).